A 134-amino-acid chain; its full sequence is ATP synthase epsilon chain (134 aa).

This sequence belongs to the ATPase epsilon chain family. F-type ATPases have 2 components, CF(1) - the catalytic core - and CF(0) - the membrane proton channel. CF(1) has five subunits: alpha(3), beta(3), gamma(1), delta(1), epsilon(1). CF(0) has three main subunits: a, b and c.

It localises to the cell membrane. Produces ATP from ADP in the presence of a proton gradient across the membrane. The protein is ATP synthase epsilon chain of Clostridium botulinum (strain Eklund 17B / Type B).